Here is a 179-residue protein sequence, read N- to C-terminus: Large ribosomal subunit protein uL6 (179 aa).

The protein belongs to the universal ribosomal protein uL6 family. In terms of assembly, part of the 50S ribosomal subunit.

Functionally, this protein binds to the 23S rRNA, and is important in its secondary structure. It is located near the subunit interface in the base of the L7/L12 stalk, and near the tRNA binding site of the peptidyltransferase center. In Chlorobium luteolum (strain DSM 273 / BCRC 81028 / 2530) (Pelodictyon luteolum), this protein is Large ribosomal subunit protein uL6.